Here is a 128-residue protein sequence, read N- to C-terminus: MATTGRPVKRVKRDISDGIAHISASFNNTIITITDRKGNALSWASAGASGFRGSRKSTPFAAQVAAEKAGAVAKEYGIKNLDVHVTGPGPGRESAVRSLNALGFKIVNVVDTTPLPHNGCRPPKKRRV.

This sequence belongs to the universal ribosomal protein uS11 family. In terms of assembly, part of the 30S ribosomal subunit. Interacts with proteins S7 and S18. Binds to IF-3.

In terms of biological role, located on the platform of the 30S subunit, it bridges several disparate RNA helices of the 16S rRNA. Forms part of the Shine-Dalgarno cleft in the 70S ribosome. The polypeptide is Small ribosomal subunit protein uS11 (Methylococcus capsulatus (strain ATCC 33009 / NCIMB 11132 / Bath)).